The following is a 561-amino-acid chain: DNA ligase B (561 aa).

Residue lysine 125 is the N6-AMP-lysine intermediate of the active site.

The protein belongs to the NAD-dependent DNA ligase family. LigB subfamily.

It carries out the reaction NAD(+) + (deoxyribonucleotide)n-3'-hydroxyl + 5'-phospho-(deoxyribonucleotide)m = (deoxyribonucleotide)n+m + AMP + beta-nicotinamide D-nucleotide.. Catalyzes the formation of phosphodiester linkages between 5'-phosphoryl and 3'-hydroxyl groups in double-stranded DNA using NAD as a coenzyme and as the energy source for the reaction. In Salmonella choleraesuis (strain SC-B67), this protein is DNA ligase B.